We begin with the raw amino-acid sequence, 446 residues long: Putative F-box protein At1g32660 (446 aa).

2 stretches are compositionally biased toward basic and acidic residues: residues 1 to 12 (MKRKDDDQEDRS) and 43 to 57 (NKLE…NPSK). The segment at 1-57 (MKRKDDDQEDRSCSSASKLDPIPLDLKMATVPTKSHMKKSHQNKLEEDEKEDTNPSK) is disordered. One can recognise an F-box domain in the interval 57 to 107 (KLELDSLPLDLKMAILTRIPAKSLMKLRCVSKMWSSIIRSRGFIDSYYAIS).

The polypeptide is Putative F-box protein At1g32660 (Arabidopsis thaliana (Mouse-ear cress)).